A 553-amino-acid polypeptide reads, in one-letter code: Transcriptional regulator HilA (553 aa).

A DNA-binding region (ompR/PhoB-type) is located at residues 11–107; sequence NKKFVFDDFI…LYGQGYRFNR (97 aa). Residue Asp-62 is modified to 4-aspartylphosphate. A TPR repeat occupies 372-405; sequence ADIKYYYGWNLFMAGQLEEALQTINECLKLDPTR.

Its function is as follows. The main transcriptional regulator of the Salmonella pathogenicity island 1 (SPI1) gene expression. Activates the expression of invasion genes by a direct action at their promoters and also indirectly by increasing the level of invF. Also binds upstream of prgH and directly activates the expression of prgHIJK operon. In Salmonella paratyphi A (strain ATCC 9150 / SARB42), this protein is Transcriptional regulator HilA (hilA).